Consider the following 341-residue polypeptide: Retinol dehydrogenase 10-A (341 aa).

The chain crosses the membrane as a helical; Signal-anchor span at residues 3–23; that stretch reads IVLEFFLVTFRVLWAFVLAAG. An NADP(+)-binding site is contributed by 40–64; it reads LITGAGSGLGRLFALEFARRRAQLV. S197 contacts substrate. Y210 functions as the Proton acceptor in the catalytic mechanism.

The protein belongs to the short-chain dehydrogenases/reductases (SDR) family.

Its subcellular location is the microsome membrane. The protein resides in the endoplasmic reticulum membrane. The catalysed reaction is all-trans-retinol + NADP(+) = all-trans-retinal + NADPH + H(+). It functions in the pathway cofactor metabolism; retinol metabolism. In terms of biological role, retinol dehydrogenase with a clear preference for NADP. Converts all-trans-retinol to all-trans-retinal. Has no detectable activity towards 11-cis-retinol, 9-cis-retinol and 13-cis-retinol. The sequence is that of Retinol dehydrogenase 10-A (rdh10-a) from Xenopus laevis (African clawed frog).